Here is a 380-residue protein sequence, read N- to C-terminus: Cytochrome b (380 aa).

Helical transmembrane passes span Phe33–Met53, Trp77–Val98, Trp113–Leu133, and Phe178–Leu198. Positions 83 and 97 each coordinate heme b. Residues His182 and His196 each coordinate heme b. His201 is a binding site for a ubiquinone. 4 consecutive transmembrane segments (helical) span residues Ile226–Phe246, Leu288–Asn308, Ile320–Gly340, and Phe347–Pro367.

Belongs to the cytochrome b family. As to quaternary structure, the cytochrome bc1 complex contains 11 subunits: 3 respiratory subunits (MT-CYB, CYC1 and UQCRFS1), 2 core proteins (UQCRC1 and UQCRC2) and 6 low-molecular weight proteins (UQCRH/QCR6, UQCRB/QCR7, UQCRQ/QCR8, UQCR10/QCR9, UQCR11/QCR10 and a cleavage product of UQCRFS1). This cytochrome bc1 complex then forms a dimer. Heme b serves as cofactor.

It is found in the mitochondrion inner membrane. Component of the ubiquinol-cytochrome c reductase complex (complex III or cytochrome b-c1 complex) that is part of the mitochondrial respiratory chain. The b-c1 complex mediates electron transfer from ubiquinol to cytochrome c. Contributes to the generation of a proton gradient across the mitochondrial membrane that is then used for ATP synthesis. This is Cytochrome b (MT-CYB) from Thomasomys ischyrus (Strong-tailed oldfield mouse).